Consider the following 157-residue polypeptide: Putative low molecular weight protein-tyrosine-phosphatase slr0328 (157 aa).

C7 acts as the Nucleophile in catalysis. R13 is an active-site residue. The Proton donor role is filled by D124.

It belongs to the low molecular weight phosphotyrosine protein phosphatase family.

The enzyme catalyses O-phospho-L-tyrosyl-[protein] + H2O = L-tyrosyl-[protein] + phosphate. In Synechocystis sp. (strain ATCC 27184 / PCC 6803 / Kazusa), this protein is Putative low molecular weight protein-tyrosine-phosphatase slr0328.